The primary structure comprises 502 residues: Solute carrier family 2, facilitated glucose transporter member 5 (502 aa).

Met-1 is subject to N-acetylmethionine. Residues 1–17 lie on the Cytoplasmic side of the membrane; that stretch reads MEKEDQEKTGKLTLVLA. Residues 18–38 traverse the membrane as a helical segment; the sequence is LATFLAAFGSSFQYGYNVAAV. Tyr-31 is a binding site for D-fructose. At 39-67 the chain is on the extracellular side; the sequence is NSPSEFMQQFYNDTYYDRNKENIESFTLT. An N-linked (GlcNAc...) asparagine glycan is attached at Asn-50. A helical transmembrane segment spans residues 68 to 90; it reads LLWSLTVSMFPFGGFIGSLMVGF. Topologically, residues 91–97 are cytoplasmic; the sequence is LVNNLGR. The chain crosses the membrane as a helical span at residues 98–118; sequence KGALLFNNIFSILPAILMGCS. At 119-125 the chain is on the extracellular side; sequence KIAKSFE. The chain crosses the membrane as a helical span at residues 126–148; the sequence is IIIASRLLVGICAGISSNVVPMY. The Cytoplasmic segment spans residues 149–160; it reads LGELAPKNLRGA. Residues 161–181 form a helical membrane-spanning segment; sequence LGVVPQLFITVGILVAQLFGL. Gln-166 lines the D-fructose pocket. The Extracellular segment spans residues 182–191; the sequence is RSVLASEEGW. A helical transmembrane segment spans residues 192 to 212; it reads PILLGLTGVPAGLQLLLLPFF. Residues 213–276 are Cytoplasmic-facing; it reads PESPRYLLIQ…LFRMQSLRWQ (64 aa). Residues 277–297 form a helical membrane-spanning segment; sequence LISTIVLMAGQQLSGVNAIYY. Residues Gln-287 and 295–297 each bind D-fructose; that span reads IYY. Topologically, residues 298-312 are extracellular; the sequence is YADQIYLSAGVKSND. A helical transmembrane segment spans residues 313–333; sequence VQYVTAGTGAVNVFMTMVTVF. Residues 334-341 lie on the Cytoplasmic side of the membrane; the sequence is VVELWGRR. Residues 342–362 form a helical membrane-spanning segment; the sequence is NLLLIGFSTCLTACIVLTVAL. The Extracellular segment spans residues 363 to 370; sequence ALQNTISW. The helical transmembrane segment at 371 to 393 threads the bilayer; that stretch reads MPYVSIVCVIVYVIGHAVGPSPI. His-386 is a binding site for D-fructose. The Cytoplasmic portion of the chain corresponds to 394-411; the sequence is PALFITEIFLQSSRPSAY. A helical membrane pass occupies residues 412–432; sequence MIGGSVHWLSNFIVGLIFPFI. 418-419 contributes to the D-fructose binding site; that stretch reads HW. The Extracellular segment spans residues 433–438; the sequence is QVGLGP. The helical transmembrane segment at 439 to 459 threads the bilayer; the sequence is YSFIIFAIICLLTTIYIFMVV. The Cytoplasmic segment spans residues 460–502; that stretch reads PETKGRTFVEINQIFAKKNKVSDVYPEKEEKELNDLPPATREQ.

This sequence belongs to the major facilitator superfamily. Sugar transporter (TC 2.A.1.1) family. Glucose transporter subfamily. Detected in jejunum. Detected in kidney, skeletal muscle, brain and adipose tissue (at protein level). Detected in small intestine and in kidney, and at much lower levels in brain. Detected in enterocytes in duodenum, jejunum, and ileum.

The protein localises to the apical cell membrane. The protein resides in the cell membrane. Its subcellular location is the sarcolemma. It catalyses the reaction D-fructose(out) = D-fructose(in). With respect to regulation, fructose uptake is inhibited by mercury ions. Fructose uptake is only slightly inhibited by cytochalasin B. Functionally, functions as a fructose transporter that has only low activity with other monosaccharides. Can mediate the uptake of deoxyglucose, but with low efficiency. Essential for fructose uptake in the small intestine. Plays a role in the regulation of salt uptake and blood pressure in response to dietary fructose. Required for the development of high blood pressure in response to high dietary fructose intake. In Rattus norvegicus (Rat), this protein is Solute carrier family 2, facilitated glucose transporter member 5.